A 285-amino-acid chain; its full sequence is Putative ankyrin repeat protein R551 (285 aa).

4 ANK repeats span residues 99–129 (DLKS…PIKI), 157–186 (NDFD…LQDE), 188–214 (IGKI…EAFR), and 215–249 (SAPD…CIQQ).

In Acanthamoeba polyphaga (Amoeba), this protein is Putative ankyrin repeat protein R551.